Reading from the N-terminus, the 205-residue chain is Guanylate kinase (205 aa).

The region spanning 7 to 185 (GNIFIISAAS…AEEDLRHIVN (179 aa)) is the Guanylate kinase-like domain. Position 14–21 (14–21 (AASGTGKT)) interacts with ATP.

This sequence belongs to the guanylate kinase family.

Its subcellular location is the cytoplasm. The enzyme catalyses GMP + ATP = GDP + ADP. Functionally, essential for recycling GMP and indirectly, cGMP. The polypeptide is Guanylate kinase (gmk) (Neisseria meningitidis serogroup A / serotype 4A (strain DSM 15465 / Z2491)).